We begin with the raw amino-acid sequence, 309 residues long: MGINFDVSRPKARSSINMTTKFHTIGLIGKPHHQGTNQTLKRLHHWLTMQGFEVLVEERVAAELGPNIEAVDLLEIGARCDLAIVVGGDGNMLGAARVLARFDLGVIGVNRGNLGFLTDLPPDAFEEALAKVLDGEFDTEHRFLLEAEVYRHGMLKASNTAVNEAVLHPGKIAHMIEFEVYIDDQFMYSQRADGMIVSTPTGSTAYALSAGGAILTPNLQALILVPMFPHTLSCRPIVVDACSTIKMVVSPDNGENLEVSCDGHVHLAVLPGDEIIVRRSSERLRLIHPKGHNYFHVLRTKLGWGSKLF.

The active-site Proton acceptor is the Asp89. Residues 89-90 (DG), 163-164 (NE), His174, Arg191, Asp193, and 204-209 (TAYALS) contribute to the NAD(+) site.

Belongs to the NAD kinase family. Requires a divalent metal cation as cofactor.

It localises to the cytoplasm. It catalyses the reaction NAD(+) + ATP = ADP + NADP(+) + H(+). Functionally, involved in the regulation of the intracellular balance of NAD and NADP, and is a key enzyme in the biosynthesis of NADP. Catalyzes specifically the phosphorylation on 2'-hydroxyl of the adenosine moiety of NAD to yield NADP. The chain is NAD kinase from Shewanella baltica (strain OS155 / ATCC BAA-1091).